The chain runs to 81 residues: Conotoxin Vc6.13 (81 aa).

Positions 1 to 19 (MEKLTILLLVAAVLMSIQA) are cleaved as a signal peptide. Positions 20 to 44 (LNQEQHQRAKINLLSKRKAPAERWW) are excised as a propeptide. Intrachain disulfides connect cysteine 49–cysteine 63, cysteine 56–cysteine 67, and cysteine 62–cysteine 72.

Belongs to the conotoxin O2 superfamily. As to expression, expressed by the venom duct.

It is found in the secreted. In terms of biological role, inhibits voltage-gated ion channels. The polypeptide is Conotoxin Vc6.13 (Conus victoriae (Queen Victoria cone)).